Here is a 437-residue protein sequence, read N- to C-terminus: Adenylosuccinate synthetase (437 aa).

GTP is bound by residues 25–31, 53–55, and K62; these read GDEGKGK and GHT. The active-site Proton acceptor is the D26. Residues D26 and G53 each contribute to the Mg(2+) site. IMP-binding positions include 26–29 and 51–54; these read DEGK and NAGH. The active-site Proton donor is H54. 4 residues coordinate IMP: T141, R155, N232, and T247. T307 lines the GTP pocket. 307 to 313 is a substrate binding site; that stretch reads TTTKRPR. R311 contacts IMP. GTP-binding positions include R313, 339–341, and 425–427; these read KLD and GVG.

Belongs to the adenylosuccinate synthetase family. In terms of assembly, homodimer. Mg(2+) serves as cofactor.

The protein resides in the cytoplasm. The catalysed reaction is IMP + L-aspartate + GTP = N(6)-(1,2-dicarboxyethyl)-AMP + GDP + phosphate + 2 H(+). It functions in the pathway purine metabolism; AMP biosynthesis via de novo pathway; AMP from IMP: step 1/2. Functionally, plays an important role in the salvage pathway for purine nucleotide biosynthesis. Catalyzes the first committed step in the biosynthesis of AMP from IMP. The chain is Adenylosuccinate synthetase from Plasmodium knowlesi (strain H).